A 454-amino-acid polypeptide reads, in one-letter code: Diaminobutyrate--2-oxoglutarate aminotransferase (454 aa).

K287 bears the N6-(pyridoxal phosphate)lysine mark.

Belongs to the class-III pyridoxal-phosphate-dependent aminotransferase family. Pyridoxal 5'-phosphate serves as cofactor.

It catalyses the reaction L-2,4-diaminobutanoate + 2-oxoglutarate = L-aspartate 4-semialdehyde + L-glutamate. It participates in amine and polyamine biosynthesis; 1,3-diaminopropane biosynthesis; 1,3-diaminopropane from L-aspartate 4-semialdehyde: step 1/2. This chain is Diaminobutyrate--2-oxoglutarate aminotransferase (dat), found in Haemophilus influenzae (strain ATCC 51907 / DSM 11121 / KW20 / Rd).